The primary structure comprises 264 residues: Thymidylate synthase (264 aa).

Arg-21 is a dUMP binding site. A (6R)-5,10-methylene-5,6,7,8-tetrahydrofolate-binding site is contributed by His-51. 126 to 127 (RR) provides a ligand contact to dUMP. Cys-146 (nucleophile) is an active-site residue. DUMP contacts are provided by residues 166–169 (RSCD), Asn-177, and 207–209 (HLY). Asp-169 is a binding site for (6R)-5,10-methylene-5,6,7,8-tetrahydrofolate. Ala-263 contributes to the (6R)-5,10-methylene-5,6,7,8-tetrahydrofolate binding site.

This sequence belongs to the thymidylate synthase family. Bacterial-type ThyA subfamily. In terms of assembly, homodimer.

The protein localises to the cytoplasm. The catalysed reaction is dUMP + (6R)-5,10-methylene-5,6,7,8-tetrahydrofolate = 7,8-dihydrofolate + dTMP. It functions in the pathway pyrimidine metabolism; dTTP biosynthesis. Catalyzes the reductive methylation of 2'-deoxyuridine-5'-monophosphate (dUMP) to 2'-deoxythymidine-5'-monophosphate (dTMP) while utilizing 5,10-methylenetetrahydrofolate (mTHF) as the methyl donor and reductant in the reaction, yielding dihydrofolate (DHF) as a by-product. This enzymatic reaction provides an intracellular de novo source of dTMP, an essential precursor for DNA biosynthesis. This is Thymidylate synthase from Hamiltonella defensa subsp. Acyrthosiphon pisum (strain 5AT).